Reading from the N-terminus, the 386-residue chain is Arginine biosynthesis bifunctional protein ArgJ (386 aa).

Thr148, Lys170, Thr181, Glu261, Asn381, and Ser386 together coordinate substrate. Thr181 (nucleophile) is an active-site residue.

The protein belongs to the ArgJ family. In terms of assembly, heterotetramer of two alpha and two beta chains.

The protein resides in the cytoplasm. The enzyme catalyses N(2)-acetyl-L-ornithine + L-glutamate = N-acetyl-L-glutamate + L-ornithine. It carries out the reaction L-glutamate + acetyl-CoA = N-acetyl-L-glutamate + CoA + H(+). The protein operates within amino-acid biosynthesis; L-arginine biosynthesis; L-ornithine and N-acetyl-L-glutamate from L-glutamate and N(2)-acetyl-L-ornithine (cyclic): step 1/1. It functions in the pathway amino-acid biosynthesis; L-arginine biosynthesis; N(2)-acetyl-L-ornithine from L-glutamate: step 1/4. Functionally, catalyzes two activities which are involved in the cyclic version of arginine biosynthesis: the synthesis of N-acetylglutamate from glutamate and acetyl-CoA as the acetyl donor, and of ornithine by transacetylation between N(2)-acetylornithine and glutamate. This Corynebacterium diphtheriae (strain ATCC 700971 / NCTC 13129 / Biotype gravis) protein is Arginine biosynthesis bifunctional protein ArgJ.